We begin with the raw amino-acid sequence, 264 residues long: Fibroblast growth factor 5 (264 aa).

A signal peptide spans 1–20; it reads MSLSLLFLIFCSHLIHSAWA. The disordered stretch occupies residues 25-81; that stretch reads RLTPEGQPAPPRNPGDSSGSRGRSSATFSSSSASSPVAASPGSQGSGSEHSSFQWSP. The segment covering 38–72 has biased composition (low complexity); that stretch reads PGDSSGSRGRSSATFSSSSASSPVAASPGSQGSGS. An N-linked (GlcNAc...) asparagine glycan is attached at Asn-108. The disordered stretch occupies residues 227-254; the sequence is FTVTVPEKKKPPVKPKVPLSQPRRSPSP.

The protein belongs to the heparin-binding growth factors family. Interacts with FGFR1 and FGFR2. Affinity between fibroblast growth factors (FGFs) and their receptors is increased by heparan sulfate glycosaminoglycans that function as coreceptors.

Its subcellular location is the secreted. Plays an important role in the regulation of cell proliferation and cell differentiation. Required for normal regulation of the hair growth cycle. Functions as an inhibitor of hair elongation by promoting progression from anagen, the growth phase of the hair follicle, into catagen the apoptosis-induced regression phase. The protein is Fibroblast growth factor 5 (Fgf5) of Mus musculus (Mouse).